Reading from the N-terminus, the 698-residue chain is Potassium-transporting ATPase ATP-binding subunit (698 aa).

Helical transmembrane passes span Ile56–Leu76, Leu82–Ala102, Thr240–Thr260, and Ile271–Ile291. Asp324 serves as the catalytic 4-aspartylphosphate intermediate. ATP is bound by residues Asp361, Glu365, Phe393–Ser400, and Lys412. Asp535 and Asp539 together coordinate Mg(2+). The next 3 helical transmembrane spans lie at Phe605–Met625, Ala633–Met653, and Gly677–Ile697.

This sequence belongs to the cation transport ATPase (P-type) (TC 3.A.3) family. Type IA subfamily. In terms of assembly, the system is composed of three essential subunits: KdpA, KdpB and KdpC.

The protein localises to the cell membrane. The enzyme catalyses K(+)(out) + ATP + H2O = K(+)(in) + ADP + phosphate + H(+). Its function is as follows. Part of the high-affinity ATP-driven potassium transport (or Kdp) system, which catalyzes the hydrolysis of ATP coupled with the electrogenic transport of potassium into the cytoplasm. This subunit is responsible for energy coupling to the transport system and for the release of the potassium ions to the cytoplasm. This is Potassium-transporting ATPase ATP-binding subunit from Bacillus cytotoxicus (strain DSM 22905 / CIP 110041 / 391-98 / NVH 391-98).